The following is a 395-amino-acid chain: Flap endonuclease 1 (395 aa).

The segment at 1–104 (MGIKHLFQVI…GELAKRTARK (104 aa)) is N-domain. D34 is a Mg(2+) binding site. Positions 47 and 70 each coordinate DNA. D86 is a binding site for Mg(2+). The disordered stretch occupies residues 102-121 (ARKAEATEAHEEAKETGTAE). Positions 122 to 253 (DVEKFSRRTV…NTALKLIREH (132 aa)) are I-domain. Mg(2+)-binding residues include E158, E160, D179, and D181. E158 is a binding site for DNA. Residues G231 and D233 each contribute to the DNA site. D233 lines the Mg(2+) pocket. The tract at residues 341-349 (QQSRLEGFF) is interaction with PCNA. The tract at residues 348–395 (FFKPVARTDEEKASLKRKHDEKLQEQKKRKKEEAKAKKEAKAKPRGAA) is disordered. Residues 353–389 (ARTDEEKASLKRKHDEKLQEQKKRKKEEAKAKKEAKA) are compositionally biased toward basic and acidic residues.

It belongs to the XPG/RAD2 endonuclease family. FEN1 subfamily. In terms of assembly, interacts with PCNA. Three molecules of fen1 bind to one PCNA trimer with each molecule binding to one PCNA monomer. PCNA stimulates the nuclease activity without altering cleavage specificity. Mg(2+) serves as cofactor. In terms of processing, phosphorylated. Phosphorylation upon DNA damage induces relocalization to the nuclear plasma.

Its subcellular location is the nucleus. It is found in the nucleolus. The protein localises to the nucleoplasm. The protein resides in the mitochondrion. In terms of biological role, structure-specific nuclease with 5'-flap endonuclease and 5'-3' exonuclease activities involved in DNA replication and repair. During DNA replication, cleaves the 5'-overhanging flap structure that is generated by displacement synthesis when DNA polymerase encounters the 5'-end of a downstream Okazaki fragment. It enters the flap from the 5'-end and then tracks to cleave the flap base, leaving a nick for ligation. Also involved in the long patch base excision repair (LP-BER) pathway, by cleaving within the apurinic/apyrimidinic (AP) site-terminated flap. Acts as a genome stabilization factor that prevents flaps from equilibrating into structures that lead to duplications and deletions. Also possesses 5'-3' exonuclease activity on nicked or gapped double-stranded DNA, and exhibits RNase H activity. Also involved in replication and repair of rDNA and in repairing mitochondrial DNA. This is Flap endonuclease 1 (fen1) from Aspergillus fumigatus (strain CBS 144.89 / FGSC A1163 / CEA10) (Neosartorya fumigata).